A 480-amino-acid chain; its full sequence is Aromatic-L-amino-acid decarboxylase (480 aa).

At methionine 1 the chain carries N-acetylmethionine. Repeat copies occupy residues 58–115 (KDIE…TELE) and 118–178 (MMDW…TQAA). A 2 X approximate tandem repeats region spans residues 58–178 (KDIEKIIMPG…AASPEFTQAA (121 aa)). Threonine 82 provides a ligand contact to substrate. Pyridoxal 5'-phosphate-binding residues include alanine 148 and serine 149. Histidine 192 is a substrate binding site. 2 residues coordinate pyridoxal 5'-phosphate: threonine 246 and asparagine 300. Lysine 303 carries the N6-(pyridoxal phosphate)lysine modification.

This sequence belongs to the group II decarboxylase family. Homodimer. Pyridoxal 5'-phosphate serves as cofactor.

It catalyses the reaction L-dopa + H(+) = dopamine + CO2. It carries out the reaction 5-hydroxy-L-tryptophan + H(+) = serotonin + CO2. It participates in catecholamine biosynthesis; dopamine biosynthesis; dopamine from L-tyrosine: step 2/2. Catalyzes the decarboxylation of L-3,4-dihydroxyphenylalanine (DOPA) to dopamine and L-5-hydroxytryptophan to serotonin. The sequence is that of Aromatic-L-amino-acid decarboxylase (Ddc) from Mus musculus (Mouse).